The primary structure comprises 186 residues: MPTPGTGSVPELQLVPFQLGHFPILQRWFATEKELVQWAGPALRHPLSLEQMHEDLAESRRRPPLRLLWSACRDDQVIGHCQLLFDRRNGVVRLARIVLAPSARGQGLGLPMLEALLAEAFADADIERVELNVYDWNAAARHLYRRAGFREEGLRRSATRVGRERWNVVLMGLLRQEWAAGGAGND.

The N-acetyltransferase domain maps to 12–176; that stretch reads LQLVPFQLGH…NVVLMGLLRQ (165 aa). Residues Q37, 97–99, G105, N137, and 142–144 contribute to the CoA site; these read IVL and HLY.

Homodimer.

In terms of biological role, catalyzes the transfer of an acetyl group from acetyl coenzyme A (AcCoA) to an acceptor substrate and releases both CoA and the acetylated product. It prefers the antibiotic chloramphenicol. This is Acetyltransferase PA2578 from Pseudomonas aeruginosa (strain ATCC 15692 / DSM 22644 / CIP 104116 / JCM 14847 / LMG 12228 / 1C / PRS 101 / PAO1).